Here is a 380-residue protein sequence, read N- to C-terminus: Lipid-A-disaccharide synthase (380 aa).

This sequence belongs to the LpxB family.

The catalysed reaction is a lipid X + a UDP-2-N,3-O-bis[(3R)-3-hydroxyacyl]-alpha-D-glucosamine = a lipid A disaccharide + UDP + H(+). It participates in bacterial outer membrane biogenesis; LPS lipid A biosynthesis. Condensation of UDP-2,3-diacylglucosamine and 2,3-diacylglucosamine-1-phosphate to form lipid A disaccharide, a precursor of lipid A, a phosphorylated glycolipid that anchors the lipopolysaccharide to the outer membrane of the cell. The polypeptide is Lipid-A-disaccharide synthase (Pseudomonas syringae pv. syringae (strain B728a)).